We begin with the raw amino-acid sequence, 298 residues long: MSTNAKESAGKNIKYPWWYGGAAGIFATMVTHPLDLAKVRLQAAPMPKPTLFRMLESILANEGVVGLYSGLSAAVLRQCTYTTVRFGAYDLLKENVIPREQLTNMAYLLPCSMFSGAIGGLAGNFADVVNIRMQNDSALEAAKRRNYKNAIDGVYKIYRYEGGLKTLFTGWKPNMVRGILMTASQVVTYDVFKNYLVTKLDFDASKNYTHLTASLLAGLVATTVCSPADVMKTRIMNGSGDHQPALKILADAVRKEGPSFMFRGWLPSFTRLGPFTMLIFFAIEQLKKHRVGMPKEDK.

3 Solcar repeats span residues 11 to 95 (KNIK…LKEN), 103 to 195 (TNMA…FKNY), and 205 to 289 (SKNY…LKKH). A run of 6 helical transmembrane segments spans residues 17 to 37 (WWYGGAAGIFATMVTHPLDLA), 58 to 76 (ILANEGVVGLYSGLSAAVL), 105 to 126 (MAYLLPCSMFSGAIGGLAGNFA), 170 to 189 (GWKPNMVRGILMTASQVVTY), 211 to 231 (LTASLLAGLVATTVCSPADVM), and 265 to 283 (WLPSFTRLGPFTMLIFFAI).

The protein belongs to the mitochondrial carrier (TC 2.A.29) family. In terms of assembly, homodimer. Binds to the TIM22 translocation complex during import.

Its subcellular location is the mitochondrion inner membrane. Its function is as follows. Mitochondrial dicarboxylic transporter catalyzing the exchange of dicarboxylic acids like malate and succinate for inorganic phosphate. Required for growth on ethanol and acetate. In Saccharomyces cerevisiae (strain ATCC 204508 / S288c) (Baker's yeast), this protein is Mitochondrial dicarboxylate transporter (DIC1).